The following is a 261-amino-acid chain: Phosphatidylglycerol--prolipoprotein diacylglyceryl transferase (261 aa).

The next 4 membrane-spanning stretches (helical) occupy residues 13–33 (LQIR…YWYI), 50–70 (VISW…ILFY), 86–106 (WNGG…MYIF), and 112–132 (IDVL…IFFG). Position 133 (arginine 133) interacts with a 1,2-diacyl-sn-glycero-3-phospho-(1'-sn-glycerol). A run of 3 helical transmembrane segments spans residues 169 to 189 (LYEA…LFFF), 197 to 217 (GMLS…IEFV), and 232 to 252 (ITMG…FIKL).

The protein belongs to the Lgt family.

Its subcellular location is the cell inner membrane. The catalysed reaction is L-cysteinyl-[prolipoprotein] + a 1,2-diacyl-sn-glycero-3-phospho-(1'-sn-glycerol) = an S-1,2-diacyl-sn-glyceryl-L-cysteinyl-[prolipoprotein] + sn-glycerol 1-phosphate + H(+). Its pathway is protein modification; lipoprotein biosynthesis (diacylglyceryl transfer). Catalyzes the transfer of the diacylglyceryl group from phosphatidylglycerol to the sulfhydryl group of the N-terminal cysteine of a prolipoprotein, the first step in the formation of mature lipoproteins. The protein is Phosphatidylglycerol--prolipoprotein diacylglyceryl transferase of Ehrlichia canis (strain Jake).